The chain runs to 141 residues: Hemoglobin subunit alpha-A (141 aa).

In terms of domain architecture, Globin spans 1–141; the sequence is VLSANDKTNV…VGNVLSAKYR (141 aa). H58 lines the O2 pocket. H87 is a heme b binding site.

It belongs to the globin family. In terms of assembly, heterotetramer of two alpha chains and two beta chains. In terms of tissue distribution, red blood cells.

Functionally, involved in oxygen transport from the lung to the various peripheral tissues. This chain is Hemoglobin subunit alpha-A (HBAA), found in Trigonoceps occipitalis (White-headed vulture).